The sequence spans 567 residues: Multidrug transporter TPO1_1 (567 aa).

Positions 1 to 71 are disordered; it reads MVEEISPKYT…NRRMSRILTG (71 aa). The N-linked (GlcNAc...) asparagine glycan is linked to asparagine 120. 12 helical membrane passes run 128–148, 157–177, 194–214, 224–244, 253–273, 283–303, 358–378, 396–416, 436–456, 471–491, 498–520, and 531–551; these read IICI…SIFA, IYHV…FGFA, GVLV…ATSK, FFGG…FADM, AICL…VMGS, WLEY…ALTF, PLLL…YLML, ELPY…LWYF, LIPM…FCWT, AGSF…NYII, AASA…PLFA, and WAGL…LFFL.

Belongs to the major facilitator superfamily. DHA1 family. Polyamines/proton antiporter (TC 2.A.1.2.16) subfamily.

Its subcellular location is the cell membrane. Functionally, multidrug resistance transporter involved in resistance to azole antifungal drugs such as the imidazoles miconazole, ketoconazole, and tioconazole; as well as the triazoles itraconazole and fluconazole. Also plays a role in the resistance to other antifungal drug families such as the polyene amphotericin B, the pyrimide analog flucytosine, the fungicide mancozeb, and the polyamine spermine. Decreases the intracellular accumulation of clotrimazole by mediating its extrusion from cells. Involved in virulence by conferring resistance to the human antimicrobial peptide histatin-5. This Candida glabrata (strain ATCC 2001 / BCRC 20586 / JCM 3761 / NBRC 0622 / NRRL Y-65 / CBS 138) (Yeast) protein is Multidrug transporter TPO1_1.